Here is a 551-residue protein sequence, read N- to C-terminus: Hyaluronan synthase 2 (551 aa).

Over 1–11 (MHCERFICILR) the chain is Cytoplasmic. A helical transmembrane segment spans residues 12-32 (IIGTTLFGVSLLLGISAAYIV). At 33 to 45 (GYQFIQTDNYYFS) the chain is on the extracellular side. The chain crosses the membrane as a helical span at residues 46 to 66 (FGLYGAILALHLIIQSLFAFL). The Cytoplasmic segment spans residues 67 to 374 (EHRKMKRSLE…NSLWFHKHHL (308 aa)). A helical membrane pass occupies residues 375-395 (WMTYEAVITGFFPFFLIATVI). Over 396 to 402 (QLFYRGR) the chain is Extracellular. The helical transmembrane segment at 403–423 (IWNILLFLLTVQLVGLIKSSF) threads the bilayer. Residues 424 to 429 (ASALRG) are Cytoplasmic-facing. Residues 430–450 (NIVMVFMSFYSVLYMSSLLPA) traverse the membrane as a helical segment. Residues 451–470 (KMFAIATINKAGWGTSGRKT) are Extracellular-facing. Residues 471–491 (IVVNFIGLIPITVWFTILLGG) form a helical membrane-spanning segment. Residues 492–509 (VCYTIWRETKKPFSESEK) lie on the Cytoplasmic side of the membrane. The helical transmembrane segment at 510–530 (IVLAVGAILYACYWVMLLTMY) threads the bilayer. Over 531 to 551 (VSLVMKCGRRRKEPQHDLVLA) the chain is Extracellular.

It belongs to the NodC/HAS family. Homodimer; dimerization promotes enzymatic activity. The cofactor is Mg(2+).

It is found in the cell membrane. The protein localises to the endoplasmic reticulum membrane. Its subcellular location is the vesicle. It localises to the golgi apparatus membrane. The protein resides in the lysosome. It catalyses the reaction [hyaluronan](n) + UDP-N-acetyl-alpha-D-glucosamine = N-acetyl-beta-D-glucosaminyl-(1-&gt;4)-[hyaluronan](n) + UDP + H(+). It carries out the reaction N-acetyl-beta-D-glucosaminyl-(1-&gt;4)-[hyaluronan](n) + UDP-alpha-D-glucuronate = [hyaluronan](n+1) + UDP + H(+). The protein operates within glycan biosynthesis; hyaluronan biosynthesis. Its function is as follows. Catalyzes the addition of GlcNAc or GlcUA monosaccharides to the nascent hyaluronan polymer. Therefore, it is essential to hyaluronan synthesis a major component of most extracellular matrices that has a structural role in tissues architectures and regulates cell adhesion, migration and differentiation. This is one of three isoenzymes responsible for cellular hyaluronan synthesis and it is particularly responsible for the synthesis of high molecular mass hyaluronan. This is Hyaluronan synthase 2 (has2) from Xenopus laevis (African clawed frog).